Reading from the N-terminus, the 535-residue chain is Sterol 26-hydroxylase, mitochondrial (535 aa).

Residues 1–36 constitute a mitochondrion transit peptide; that stretch reads MAALGCARLRWALLGPRVAGCGLCPQGARAKAAIPT. Lys286 carries the post-translational modification N6-acetyllysine. Residues 387–401 form a sterol-binding region; that stretch reads PLLKAVLKETLRLYP. Heme is bound at residue Cys480. Position 524 is an N6-acetyllysine (Lys524).

This sequence belongs to the cytochrome P450 family. In terms of assembly, interacts with HSP70; this interaction is required for initial targeting to mitochondria. Requires heme as cofactor. Expressed in all tissues tested. Highest expression in liver and duodenum, followed by adrenal gland and lung. Low expression in kidney and spleen.

It is found in the mitochondrion inner membrane. The enzyme catalyses 5beta-cholestane-3alpha,7alpha,12alpha-triol + 6 reduced [adrenodoxin] + 3 O2 + 5 H(+) = (25R)-3alpha,7alpha,12alpha-trihydroxy-5beta-cholestan-26-oate + 6 oxidized [adrenodoxin] + 4 H2O. It catalyses the reaction cholestanol + 2 reduced [adrenodoxin] + O2 + 2 H(+) = (25R)-26-hydroxycholestanol + 2 oxidized [adrenodoxin] + H2O. It carries out the reaction (25R)-3beta-hydroxycholest-5-en-7-one-26-al + 2 reduced [adrenodoxin] + O2 + H(+) = (25R)-3beta-hydroxycholest-5-en-7-one-26-oate + 2 oxidized [adrenodoxin] + H2O. The catalysed reaction is (25R)-3beta,26-dihydroxycholest-5-en-7-one + 2 reduced [adrenodoxin] + O2 + 2 H(+) = (25R)-3beta-hydroxycholest-5-en-7-one-26-al + 2 oxidized [adrenodoxin] + 2 H2O. The enzyme catalyses 7-oxocholesterol + 2 reduced [adrenodoxin] + O2 + 2 H(+) = (25R)-3beta,26-dihydroxycholest-5-en-7-one + 2 oxidized [adrenodoxin] + H2O. It catalyses the reaction calciol + 2 reduced [adrenodoxin] + O2 + 2 H(+) = calcidiol + 2 oxidized [adrenodoxin] + H2O. It carries out the reaction (25R)-5beta-cholestane-3alpha,7alpha,12alpha,26-tetrol + 2 reduced [adrenodoxin] + O2 + 2 H(+) = (25R)-3alpha,7alpha,12alpha-trihydroxy-5beta-cholestan-26-al + 2 oxidized [adrenodoxin] + 2 H2O. The catalysed reaction is 2 reduced [adrenodoxin] + cholesterol + O2 + 2 H(+) = (25R)-cholest-5-ene-3beta,26-diol + 2 oxidized [adrenodoxin] + H2O. The enzyme catalyses (25R)-3beta,4beta-dihydroxycholest-5-en-26-al + 2 reduced [adrenodoxin] + O2 + H(+) = (25R)-3beta,4beta-dihydroxycholest-5-en-26-oate + 2 oxidized [adrenodoxin] + H2O. It catalyses the reaction (25R)-4beta,26-dihydroxycholesterol + 2 reduced [adrenodoxin] + O2 + 2 H(+) = (25R)-3beta,4beta-dihydroxycholest-5-en-26-al + 2 oxidized [adrenodoxin] + 2 H2O. It carries out the reaction 4beta-hydroxycholesterol + 2 reduced [adrenodoxin] + O2 + 2 H(+) = (25R)-4beta,26-dihydroxycholesterol + 2 oxidized [adrenodoxin] + H2O. The catalysed reaction is (25R)-3beta-hydroxy-5-cholesten-26-al + 2 reduced [adrenodoxin] + O2 + H(+) = (25R)-3beta-hydroxy-5-cholestenoate + 2 oxidized [adrenodoxin] + H2O. The enzyme catalyses (25R)-cholest-5-ene-3beta,26-diol + 2 reduced [adrenodoxin] + O2 + 2 H(+) = (25R)-3beta-hydroxy-5-cholesten-26-al + 2 oxidized [adrenodoxin] + 2 H2O. It catalyses the reaction (25R)-3alpha,7alpha,12alpha-trihydroxy-5beta-cholestan-26-al + 2 reduced [adrenodoxin] + O2 + H(+) = (25R)-3alpha,7alpha,12alpha-trihydroxy-5beta-cholestan-26-oate + 2 oxidized [adrenodoxin] + H2O. It carries out the reaction 5beta-cholestane-3alpha,7alpha,12alpha-triol + 2 reduced [adrenodoxin] + O2 + 2 H(+) = (25R)-5beta-cholestane-3alpha,7alpha,12alpha,26-tetrol + 2 oxidized [adrenodoxin] + H2O. It functions in the pathway hormone biosynthesis; cholecalciferol biosynthesis. The protein operates within steroid metabolism; cholesterol degradation. It participates in lipid metabolism; bile acid biosynthesis. Cytochrome P450 monooxygenase that catalyzes regio- and stereospecific hydroxylation of cholesterol and its derivatives. Hydroxylates (with R stereochemistry) the terminal methyl group of cholesterol side-chain in a three step reaction to yield at first a C26 alcohol, then a C26 aldehyde and finally a C26 acid. Regulates cholesterol homeostasis by catalyzing the conversion of excess cholesterol to bile acids via both the 'neutral' (classic) and the 'acid' (alternative) pathways. May also regulate cholesterol homeostasis via generation of active oxysterols, which act as ligands for NR1H2 and NR1H3 nuclear receptors, modulating the transcription of genes involved in lipid metabolism. Plays a role in cholestanol metabolism in the cerebellum. Similarly to cholesterol, hydroxylates cholestanol and may facilitate sterol diffusion through the blood-brain barrier to the systemic circulation for further degradation. Also hydroxylates retinal 7-ketocholesterol, a noxious oxysterol with pro-inflammatory and pro-apoptotic effects, and may play a role in its elimination from the retinal pigment epithelium. May play a redundant role in vitamin D biosynthesis. Catalyzes 25-hydroxylation of vitamin D3 that is required for its conversion to a functionally active form. The chain is Sterol 26-hydroxylase, mitochondrial (CYP27A1) from Oryctolagus cuniculus (Rabbit).